A 53-amino-acid chain; its full sequence is Small ribosomal subunit protein uS14m (53 aa).

It belongs to the universal ribosomal protein uS14 family.

The protein resides in the mitochondrion. The protein is Small ribosomal subunit protein uS14m (RPS14) of Bigelowiella natans (Pedinomonas minutissima).